We begin with the raw amino-acid sequence, 279 residues long: Large ribosomal subunit protein uL2 (279 aa).

The tract at residues 223 to 279 is disordered; that stretch reads VVMNPVDHPHGGGEGRTSGGRHPVSPWGQPTKGYKTRRSARPSDKFIVQKRKRNRNR. Over residues 270–279 the composition is skewed to basic residues; the sequence is VQKRKRNRNR.

This sequence belongs to the universal ribosomal protein uL2 family. As to quaternary structure, part of the 50S ribosomal subunit. Forms a bridge to the 30S subunit in the 70S ribosome.

One of the primary rRNA binding proteins. Required for association of the 30S and 50S subunits to form the 70S ribosome, for tRNA binding and peptide bond formation. It has been suggested to have peptidyltransferase activity; this is somewhat controversial. Makes several contacts with the 16S rRNA in the 70S ribosome. The sequence is that of Large ribosomal subunit protein uL2 from Leptospira borgpetersenii serovar Hardjo-bovis (strain JB197).